A 319-amino-acid chain; its full sequence is Olfactory receptor 13F1 (319 aa).

At 1 to 25 the chain is on the extracellular side; sequence MFPANWTSVKVFFFLGFFHYPKVQV. N-linked (GlcNAc...) asparagine glycosylation is present at Asn5. Residues 26–46 traverse the membrane as a helical segment; that stretch reads IIFAVCLLMYLITLLGNIFLI. The Cytoplasmic segment spans residues 47-54; that stretch reads SITILDSH. A helical transmembrane segment spans residues 55–75; it reads LHTPMYLFLSNLSFLDIWYSS. Residues 76–99 are Extracellular-facing; sequence SALSPMLANFVSGRNTISFSGCAT. A disulfide bridge links Cys97 with Cys189. The chain crosses the membrane as a helical span at residues 100–120; that stretch reads QMYLSLAMGSTECVLLPMMAY. The Cytoplasmic portion of the chain corresponds to 121 to 139; that stretch reads DRYVAICNPLRYPVIMNRR. A helical transmembrane segment spans residues 140-160; the sequence is TCVQIAAGSWMTGCLTAMVEM. The Extracellular portion of the chain corresponds to 161-197; that stretch reads MSVLPLSLCGNSIINHFTCEILAILKLVCVDTSLVQL. The helical transmembrane segment at 198 to 217 threads the bilayer; that stretch reads IMLVISVLLLPMPMLLICIS. At 218-237 the chain is on the cytoplasmic side; it reads YAFILASILRISSVEGRSKA. A helical transmembrane segment spans residues 238–258; the sequence is FSTCTAHLMVVVLFYGTALSM. Topologically, residues 259–271 are extracellular; that stretch reads HLKPSAVDSQEID. A helical transmembrane segment spans residues 272-292; it reads KFMALVYAGQTPMLNPIIYSL. At 293 to 319 the chain is on the cytoplasmic side; it reads RNKEVKVALKKLLIRNHFNTAFISILK.

It belongs to the G-protein coupled receptor 1 family.

The protein localises to the cell membrane. Its function is as follows. Odorant receptor. The sequence is that of Olfactory receptor 13F1 (OR13F1) from Homo sapiens (Human).